Consider the following 178-residue polypeptide: Methyltransferase flvH (178 aa).

The Post-SET domain occupies 120 to 136 (QPFNCFCGSQNCLGLIA). Positions 124, 126, and 131 each coordinate Zn(2+).

The protein belongs to the class V-like SAM-binding methyltransferase superfamily.

It carries out the reaction L-lysine + 2 S-adenosyl-L-methionine = N(6),N(6)-dimethyl-L-lysine + 2 S-adenosyl-L-homocysteine + 2 H(+). Its pathway is secondary metabolite biosynthesis; terpenoid biosynthesis. Its function is as follows. Methyltransferase; part of the gene cluster that mediates the biosynthesis of flavunoidine, an alkaloidal terpenoid with a tetracyclic cage-like core connected to dimethylcadaverine via a C-N bond and acylated with 5,5-dimethyl-L-pipecolate. The tetracyclic core is synthesized by the terpene cyclase flvE and the cytochrome P450 monooxygenase flvD. The terpene cyclase flvE catalyzes the cyclization of farnesyl pyrophosphate (FPP) to form (1R,4R,5S)-(+)-acoradiene and the cytochrome P450 monooxygenase flvD is then responsible for oxidative conversion of (1R,4R,5S)-(+)-acoradiene into the tetracyclic cage present in the final product flavunoidine. In parallel, the N-methyltransferase flvH dimethylates L-lysine to give N,N-dimethyl-L-Lysin which is decarboxylated by flvG to afford dimethylcadaverine. The terpene cyclase-like protein flvF is the enzyme that attaches the dimethylcadaverine precusor at the C-7 of the tetracyclic cage to yield pre-flavunoidine. The cytochrome monooxygenase flvC hydroxylates the C-10 position of pre-flavunoidine whereas the NRPS flvI acylates the terpenoid core at the hydroxylated C-10 with dimethylpipecolate to yield final flavunoidine. The bifunctional enzyme flvA and the dehydrogenase flvB are responsible for the synthesis of the dimethylpipecolate precursor. The PLP-dependent lyase domain of flvA might use L-O-acetyl-homoserine and alpha-keto-isovalerate to form an intermediary ketone that can cyclize intramolecularly to yield an imine. The imine can be reduced by flvB to yield the 6-carboxylated pipecolate. The C-terminal alpha-KG-dependent oxygenase domain of flvA is then proposed to catalyze the decarboxylation to yield dimethylpipecolate. This is Methyltransferase flvH from Aspergillus flavus (strain ATCC 200026 / FGSC A1120 / IAM 13836 / NRRL 3357 / JCM 12722 / SRRC 167).